The sequence spans 793 residues: Endonuclease MutS2 (793 aa).

335–342 (GPNTGGKT) is an ATP binding site. The 76-residue stretch at 718-793 (IDVRGYNLEE…ESGVTIVELR (76 aa)) folds into the Smr domain.

Belongs to the DNA mismatch repair MutS family. MutS2 subfamily. In terms of assembly, homodimer. Binds to stalled ribosomes, contacting rRNA.

In terms of biological role, endonuclease that is involved in the suppression of homologous recombination and thus may have a key role in the control of bacterial genetic diversity. Acts as a ribosome collision sensor, splitting the ribosome into its 2 subunits. Detects stalled/collided 70S ribosomes which it binds and splits by an ATP-hydrolysis driven conformational change. Acts upstream of the ribosome quality control system (RQC), a ribosome-associated complex that mediates the extraction of incompletely synthesized nascent chains from stalled ribosomes and their subsequent degradation. Probably generates substrates for RQC. This Acetivibrio thermocellus (strain ATCC 27405 / DSM 1237 / JCM 9322 / NBRC 103400 / NCIMB 10682 / NRRL B-4536 / VPI 7372) (Clostridium thermocellum) protein is Endonuclease MutS2.